Reading from the N-terminus, the 630-residue chain is MPTTFKEIPRERPVTPLLDRADTPHGLRRLGEAELETLADELRLELLYSVGQTGGHFGAGLGVIELTIALHYVFDTPDDRLVWDVGHQAYPHKILTGRRARMSTLRQKDGVAAFPRRSESEYDTFGVGHSSTSISAALGMAIASRLQGSERKSIAVIGDGALTAGMAFEALNHAPEVAANMLVILNDNDMSISRNVGGLSNYLAKILSSRTYSSMREGSKKVLSRLPGAWEIARRTEEYAKGMLVPGTLFEELGWNYIGPIDGHDLPTLIATLRNMRDLKGPQFLHVVTKKGKGFAPAEVDPIGYHAITKLEPLNAPAAPKKISAPKYSAVFGQWICDMAEADSRLVGITPAMKEGSDLVAFSERFPERYFDVAIAEQHAVTLAAGMACEGSKPVVAIYSTFLQRGYDQLVHDVAVQNLDVLFAIDRAGLVGEDGPTHAGSFDLSYLRCIPGMVVMTPSDENELRKLLNTGYLHTGPAAVRYPRGTGPDALIETGLDPVEIGKGVVRRQGQGVAILVFGVQLADALVVAEKLDATVIDMRFVKPLDEALVSEAAANHELLVTLEENAVMGGAGAAVSEFLARANILKSVLHLGLPDTYVEHAKPAQMLAECGLDAQGIEAAINERLALIG.

Residues H87 and 128–130 (GHS) contribute to the thiamine diphosphate site. D159 serves as a coordination point for Mg(2+). Thiamine diphosphate-binding positions include 160–161 (GA), N188, F295, and E377. N188 contacts Mg(2+).

It belongs to the transketolase family. DXPS subfamily. In terms of assembly, homodimer. It depends on Mg(2+) as a cofactor. Thiamine diphosphate serves as cofactor.

The enzyme catalyses D-glyceraldehyde 3-phosphate + pyruvate + H(+) = 1-deoxy-D-xylulose 5-phosphate + CO2. Its pathway is metabolic intermediate biosynthesis; 1-deoxy-D-xylulose 5-phosphate biosynthesis; 1-deoxy-D-xylulose 5-phosphate from D-glyceraldehyde 3-phosphate and pyruvate: step 1/1. Catalyzes the acyloin condensation reaction between C atoms 2 and 3 of pyruvate and glyceraldehyde 3-phosphate to yield 1-deoxy-D-xylulose-5-phosphate (DXP). The sequence is that of 1-deoxy-D-xylulose-5-phosphate synthase from Pseudomonas savastanoi pv. phaseolicola (strain 1448A / Race 6) (Pseudomonas syringae pv. phaseolicola (strain 1448A / Race 6)).